We begin with the raw amino-acid sequence, 340 residues long: Ketol-acid reductoisomerase (NADP(+)) (340 aa).

The region spanning 3 to 182 is the KARI N-terminal Rossmann domain; sequence VTMYYEEDVE…GCARVGIIET (180 aa). NADP(+)-binding positions include 26–29, Arg-49, Ser-53, and 83–86; these read YGSQ and DELQ. His-108 is a catalytic residue. Gly-134 is a binding site for NADP(+). The KARI C-terminal knotted domain maps to 183–328; it reads TFKEETEEDL…AELRKAMPFT (146 aa). The Mg(2+) site is built by Asp-191, Glu-195, Glu-227, and Glu-231. Residue Ser-252 participates in substrate binding.

This sequence belongs to the ketol-acid reductoisomerase family. It depends on Mg(2+) as a cofactor.

It catalyses the reaction (2R)-2,3-dihydroxy-3-methylbutanoate + NADP(+) = (2S)-2-acetolactate + NADPH + H(+). It carries out the reaction (2R,3R)-2,3-dihydroxy-3-methylpentanoate + NADP(+) = (S)-2-ethyl-2-hydroxy-3-oxobutanoate + NADPH + H(+). Its pathway is amino-acid biosynthesis; L-isoleucine biosynthesis; L-isoleucine from 2-oxobutanoate: step 2/4. It participates in amino-acid biosynthesis; L-valine biosynthesis; L-valine from pyruvate: step 2/4. Its function is as follows. Involved in the biosynthesis of branched-chain amino acids (BCAA). Catalyzes an alkyl-migration followed by a ketol-acid reduction of (S)-2-acetolactate (S2AL) to yield (R)-2,3-dihydroxy-isovalerate. In the isomerase reaction, S2AL is rearranged via a Mg-dependent methyl migration to produce 3-hydroxy-3-methyl-2-ketobutyrate (HMKB). In the reductase reaction, this 2-ketoacid undergoes a metal-dependent reduction by NADPH to yield (R)-2,3-dihydroxy-isovalerate. This chain is Ketol-acid reductoisomerase (NADP(+)), found in Lactococcus lactis subsp. cremoris (strain MG1363).